The primary structure comprises 384 residues: Mannitol-1-phosphate 5-dehydrogenase (384 aa).

3 to 14 contributes to the NAD(+) binding site; that stretch reads AVHFGAGNIGRG.

This sequence belongs to the mannitol dehydrogenase family.

The catalysed reaction is D-mannitol 1-phosphate + NAD(+) = beta-D-fructose 6-phosphate + NADH + H(+). The protein is Mannitol-1-phosphate 5-dehydrogenase of Arthrobacter sp. (strain FB24).